A 229-amino-acid polypeptide reads, in one-letter code: Nectarin-1 (229 aa).

The first 32 residues, 1–32, serve as a signal peptide directing secretion; sequence MAAFGIKSKIFQIMEMTILFLFAISIDRYCFA. C42 and C57 are disulfide-bonded. N60 carries N-linked (GlcNAc...) asparagine glycosylation. In terms of domain architecture, Cupin type-1 spans 69 to 217; that stretch reads FAISKPGATN…TFQINIEDVQ (149 aa). Residues H117, H119, E124, and H163 each contribute to the Mn(2+) site.

This sequence belongs to the germin family. In terms of assembly, monomer. In the absence of manganese, it forms tetrameric and pentameric forms which show superoxide dismutase activity. It depends on Mn(2+) as a cofactor. Post-translationally, glycosylated.

It localises to the secreted. It is found in the extracellular space. The protein resides in the apoplast. The enzyme catalyses 2 superoxide + 2 H(+) = H2O2 + O2. May interact with bacterial adhesins thereby protecting the reproductive tissues from microbial attack. Has no oxalate oxidase activity. The sequence is that of Nectarin-1 (NEC1) from Nicotiana plumbaginifolia (Leadwort-leaved tobacco).